The chain runs to 325 residues: Tetraacyldisaccharide 4'-kinase (325 aa).

Threonine 55–threonine 62 is a binding site for ATP.

It belongs to the LpxK family.

It catalyses the reaction a lipid A disaccharide + ATP = a lipid IVA + ADP + H(+). The protein operates within glycolipid biosynthesis; lipid IV(A) biosynthesis; lipid IV(A) from (3R)-3-hydroxytetradecanoyl-[acyl-carrier-protein] and UDP-N-acetyl-alpha-D-glucosamine: step 6/6. Its function is as follows. Transfers the gamma-phosphate of ATP to the 4'-position of a tetraacyldisaccharide 1-phosphate intermediate (termed DS-1-P) to form tetraacyldisaccharide 1,4'-bis-phosphate (lipid IVA). This chain is Tetraacyldisaccharide 4'-kinase, found in Salmonella paratyphi B (strain ATCC BAA-1250 / SPB7).